We begin with the raw amino-acid sequence, 261 residues long: Na(+)-translocating NADH-quinone reductase subunit C (261 aa).

The helical transmembrane segment at L11–A31 threads the bilayer. The residue at position 230 (T230) is an FMN phosphoryl threonine.

It belongs to the NqrC family. Composed of six subunits; NqrA, NqrB, NqrC, NqrD, NqrE and NqrF. Requires FMN as cofactor.

It is found in the cell inner membrane. It catalyses the reaction a ubiquinone + n Na(+)(in) + NADH + H(+) = a ubiquinol + n Na(+)(out) + NAD(+). NQR complex catalyzes the reduction of ubiquinone-1 to ubiquinol by two successive reactions, coupled with the transport of Na(+) ions from the cytoplasm to the periplasm. NqrA to NqrE are probably involved in the second step, the conversion of ubisemiquinone to ubiquinol. This is Na(+)-translocating NADH-quinone reductase subunit C from Pseudomonas aeruginosa (strain ATCC 15692 / DSM 22644 / CIP 104116 / JCM 14847 / LMG 12228 / 1C / PRS 101 / PAO1).